A 335-amino-acid chain; its full sequence is Glycerol-3-phosphate dehydrogenase [NAD(P)+] (335 aa).

Positions 15, 16, 36, and 110 each coordinate NADPH. Positions 110, 139, and 141 each coordinate sn-glycerol 3-phosphate. Alanine 143 provides a ligand contact to NADPH. Sn-glycerol 3-phosphate is bound by residues lysine 195, aspartate 248, serine 258, arginine 259, and asparagine 260. The Proton acceptor role is filled by lysine 195. NADPH is bound at residue arginine 259. The NADPH site is built by valine 283 and glutamate 285.

The protein belongs to the NAD-dependent glycerol-3-phosphate dehydrogenase family.

Its subcellular location is the cytoplasm. It carries out the reaction sn-glycerol 3-phosphate + NAD(+) = dihydroxyacetone phosphate + NADH + H(+). It catalyses the reaction sn-glycerol 3-phosphate + NADP(+) = dihydroxyacetone phosphate + NADPH + H(+). The protein operates within membrane lipid metabolism; glycerophospholipid metabolism. Its function is as follows. Catalyzes the reduction of the glycolytic intermediate dihydroxyacetone phosphate (DHAP) to sn-glycerol 3-phosphate (G3P), the key precursor for phospholipid synthesis. The sequence is that of Glycerol-3-phosphate dehydrogenase [NAD(P)+] from Haemophilus influenzae (strain 86-028NP).